A 205-amino-acid chain; its full sequence is Holliday junction branch migration complex subunit RuvA (205 aa).

The tract at residues 1 to 64 (MIGRLRGIIL…EDAQLLYGFN (64 aa)) is domain I. The segment at 65 to 143 (DKQERALFRE…GLNGDLFNNT (79 aa)) is domain II. The tract at residues 144–156 (GDIQLPASNSSQI) is flexible linker. A domain III region spans residues 157–205 (SDADIEAEAASALVALGYKPQEASRLVSKIAKPGADCETLIRDALRAAL).

Belongs to the RuvA family. In terms of assembly, homotetramer. Forms an RuvA(8)-RuvB(12)-Holliday junction (HJ) complex. HJ DNA is sandwiched between 2 RuvA tetramers; dsDNA enters through RuvA and exits via RuvB. An RuvB hexamer assembles on each DNA strand where it exits the tetramer. Each RuvB hexamer is contacted by two RuvA subunits (via domain III) on 2 adjacent RuvB subunits; this complex drives branch migration. In the full resolvosome a probable DNA-RuvA(4)-RuvB(12)-RuvC(2) complex forms which resolves the HJ.

It localises to the cytoplasm. In terms of biological role, the RuvA-RuvB-RuvC complex processes Holliday junction (HJ) DNA during genetic recombination and DNA repair, while the RuvA-RuvB complex plays an important role in the rescue of blocked DNA replication forks via replication fork reversal (RFR). RuvA specifically binds to HJ cruciform DNA, conferring on it an open structure. The RuvB hexamer acts as an ATP-dependent pump, pulling dsDNA into and through the RuvAB complex. HJ branch migration allows RuvC to scan DNA until it finds its consensus sequence, where it cleaves and resolves the cruciform DNA. The protein is Holliday junction branch migration complex subunit RuvA of Yersinia enterocolitica serotype O:8 / biotype 1B (strain NCTC 13174 / 8081).